Reading from the N-terminus, the 328-residue chain is Diacetylchitobiose uptake system permease protein DasB (328 aa).

The segment at 1–27 (MTVQTERPPSGPSDVRKADGGGTGGTR) is disordered. 6 helical membrane passes run 36–56 (ALAP…LLGW), 104–124 (IIFT…IGLL), 134–154 (FVLM…ATTV), 188–208 (FSTF…FVAI), 247–267 (FLYA…VQVY), and 297–317 (MGAA…AYYL). The 217-residue stretch at 100 to 316 (TVRSIIFTAV…LILLGLTAYY (217 aa)) folds into the ABC transmembrane type-1 domain.

Belongs to the binding-protein-dependent transport system permease family. As to quaternary structure, the complex is composed of two ATP-binding proteins (MsiK), two transmembrane proteins (DasB and DasC) and a solute-binding protein (DasA).

Its subcellular location is the cell membrane. Functionally, part of the ABC transporter complex DasABC-MsiK involved in N,N'-diacetylchitobiose ((GlcNAc)2) uptake. Responsible for the translocation of the substrate across the membrane. This Streptomyces coelicolor (strain ATCC BAA-471 / A3(2) / M145) protein is Diacetylchitobiose uptake system permease protein DasB.